A 193-amino-acid chain; its full sequence is dCTP deaminase (193 aa).

Residues 110-115 (RSSLAR), aspartate 128, 136-138 (VLE), tyrosine 171, lysine 178, and glutamine 182 contribute to the dCTP site. Glutamate 138 acts as the Proton donor/acceptor in catalysis.

The protein belongs to the dCTP deaminase family. Homotrimer.

The catalysed reaction is dCTP + H2O + H(+) = dUTP + NH4(+). It functions in the pathway pyrimidine metabolism; dUMP biosynthesis; dUMP from dCTP (dUTP route): step 1/2. Functionally, catalyzes the deamination of dCTP to dUTP. The chain is dCTP deaminase from Buchnera aphidicola subsp. Baizongia pistaciae (strain Bp).